The following is a 237-amino-acid chain: Arginine-binding periplasmic protein (237 aa).

The signal sequence occupies residues 1-18 (MKKTLLTLLFGCVVTAQA).

This sequence belongs to the bacterial solute-binding protein 3 family.

It localises to the periplasm. Its function is as follows. Binds arginine; part of the arginine periplasmic transport system. This chain is Arginine-binding periplasmic protein (lapT), found in Mannheimia haemolytica (Pasteurella haemolytica).